The following is a 376-amino-acid chain: Chorismate synthase ARO2 (376 aa).

An N-acetylserine modification is found at Ser-2. His-17 is an active-site residue. Positions 39-61 (IQPQLTRRRPGQSKLSTPRDEKD) are disordered. Residues His-104 and Asp-339 contribute to the active site.

Belongs to the chorismate synthase family. As to quaternary structure, homotetramer.

The catalysed reaction is 5-O-(1-carboxyvinyl)-3-phosphoshikimate = chorismate + phosphate. The enzyme catalyses FMNH2 + NADP(+) = FMN + NADPH + 2 H(+). It functions in the pathway metabolic intermediate biosynthesis; chorismate biosynthesis; chorismate from D-erythrose 4-phosphate and phosphoenolpyruvate: step 7/7. In terms of biological role, bifunctional chorismate synthase and flavin reductase that catalyzes the conversion of 5-enolpyruvylshikimate 3-phosphate (EPSP) to form chorismate, which is the last common intermediate in the synthesis of the three aromatic amino acids phenylalanine, tyrosine and tryptophan. Also acts as a flavin reductase (FR) able to generate reduced flavin mononucleotide in the presence of NADPH. The sequence is that of Chorismate synthase ARO2 from Saccharomyces cerevisiae (strain ATCC 204508 / S288c) (Baker's yeast).